Here is a 205-residue protein sequence, read N- to C-terminus: Beta-crystallin B2 (205 aa).

At A2 the chain carries N-acetylalanine. Residues 2 to 16 (ASDHQSPATKQQQPS) form an N-terminal arm region. Beta/gamma crystallin 'Greek key' domains follow at residues 17-56 (SKIV…LVHS) and 57-101 (GPWV…RPIK). The interval 102 to 106 (VDSQE) is connecting peptide. Beta/gamma crystallin 'Greek key' domains lie at 107 to 148 (HKIV…RVQS) and 149 to 191 (GTWV…RRIR). The segment at 193-205 (MQWHQRGTFHPTN) is C-terminal arm.

Belongs to the beta/gamma-crystallin family. In terms of assembly, homo/heterodimer, or complexes of higher-order. The structure of beta-crystallin oligomers seems to be stabilized through interactions between the N-terminal arms. In terms of processing, the N-terminus is blocked.

Crystallins are the dominant structural components of the vertebrate eye lens. In Aquarana catesbeiana (American bullfrog), this protein is Beta-crystallin B2.